The following is a 261-amino-acid chain: Anamorsin homolog (261 aa).

The interval 4 to 134 (VQENNQVLYI…EIGSAAKLSL (131 aa)) is N-terminal SAM-like domain. A linker region spans residues 134-173 (LGGGANKAKVAAVWKLDVDDDGEAEERIDEDELLDEEDKV). Residues Cys-183, Cys-192, Cys-195, and Cys-197 each contribute to the [2Fe-2S] cluster site. A fe-S binding site A region spans residues 183 to 197 (CGTTGKRKACKDCSC). Residues Cys-222, Cys-225, Cys-233, and Cys-236 each coordinate [4Fe-4S] cluster. 2 consecutive short sequence motifs (cx2C motif) follow at residues 222–225 (CGSC) and 233–236 (CATC). The segment at 222-236 (CGSCYLGDAFRCATC) is fe-S binding site B.

It belongs to the anamorsin family. In terms of assembly, monomer. It depends on [2Fe-2S] cluster as a cofactor. [4Fe-4S] cluster serves as cofactor.

The protein resides in the cytoplasm. It localises to the mitochondrion intermembrane space. Its function is as follows. Component of the cytosolic iron-sulfur (Fe-S) protein assembly (CIA) machinery. Required for the maturation of extramitochondrial Fe-S proteins. Part of an electron transfer chain functioning in an early step of cytosolic Fe-S biogenesis, facilitating the de novo assembly of a [4Fe-4S] cluster on the cytosolic Fe-S scaffold complex. Electrons are transferred from NADPH via a FAD- and FMN-containing diflavin oxidoreductase. Together with the diflavin oxidoreductase, also required for the assembly of the diferric tyrosyl radical cofactor of ribonucleotide reductase (RNR), probably by providing electrons for reduction during radical cofactor maturation in the catalytic small subunit. The sequence is that of Anamorsin homolog from Culex quinquefasciatus (Southern house mosquito).